Here is a 148-residue protein sequence, read N- to C-terminus: 3-hydroxyacyl-[acyl-carrier-protein] dehydratase FabZ (148 aa).

Residue His50 is part of the active site.

This sequence belongs to the thioester dehydratase family. FabZ subfamily.

The protein localises to the cytoplasm. The catalysed reaction is a (3R)-hydroxyacyl-[ACP] = a (2E)-enoyl-[ACP] + H2O. Functionally, involved in unsaturated fatty acids biosynthesis. Catalyzes the dehydration of short chain beta-hydroxyacyl-ACPs and long chain saturated and unsaturated beta-hydroxyacyl-ACPs. The chain is 3-hydroxyacyl-[acyl-carrier-protein] dehydratase FabZ from Lactobacillus helveticus (strain DPC 4571).